The sequence spans 374 residues: MANQVIKCKAAVAWEAGKPLSIEEVEVAPPKAHEVRIKIIATAVCHTDAYTLSGADPEGNYPVILGHEGAGIVESVGEGVTKLKAGDTVIPLYIPQCGECKFCLNPKTNLCQKIRVTQGKGLMPDGTSRFTCKGKTILHYMGTSTFSEYTVVADISVAKIDPLAPLDKVCLLGCGISTGYGAALNAAKVEPGSTCAVFGLGGVGLAVIMGCKMAGAARIIGVDINKDKFARAKEFGASECINPQDFSKPIQEVLIEMTDGGVDYSFECIGNVKVMRAALEACHKGWGISVVVGVAASGEEIATRPFQLVTGRTWKGTAFGGWKSVESVPKLVSEYMSKKIKVDEFVTHSLPFDQINEAFDLMHAGKSIRTVVKL.

At Ala2 the chain carries N-acetylalanine. The Zn(2+) site is built by Cys45, His67, Cys97, Cys100, Cys103, Cys111, and Cys174. Lys233 bears the N6-succinyllysine mark. Residue Ser247 is modified to Phosphoserine. Lys315 carries the N6-succinyllysine modification. Position 324 is a phosphoserine (Ser324).

Belongs to the zinc-containing alcohol dehydrogenase family. Class-III subfamily. In terms of assembly, homodimer. Requires Zn(2+) as cofactor.

The protein localises to the cytoplasm. The catalysed reaction is a primary alcohol + NAD(+) = an aldehyde + NADH + H(+). It catalyses the reaction a secondary alcohol + NAD(+) = a ketone + NADH + H(+). The enzyme catalyses S-(hydroxymethyl)glutathione + NADP(+) = S-formylglutathione + NADPH + H(+). It carries out the reaction S-(hydroxymethyl)glutathione + NAD(+) = S-formylglutathione + NADH + H(+). The catalysed reaction is 20-oxo-(5Z,8Z,11Z,14Z)-eicosatetraenoate + NAD(+) + H2O = (5Z,8Z,11Z,14Z)-eicosatetraenedioate + NADH + 2 H(+). It catalyses the reaction 20-hydroxy-(5Z,8Z,11Z,14Z)-eicosatetraenoate + NAD(+) = 20-oxo-(5Z,8Z,11Z,14Z)-eicosatetraenoate + NADH + H(+). The enzyme catalyses S-nitrosoglutathione + NADH + H(+) = S-(hydroxysulfenamide)glutathione + NAD(+). Functionally, catalyzes the oxidation of long-chain primary alcohols and the oxidation of S-(hydroxymethyl) glutathione. Also oxidizes long chain omega-hydroxy fatty acids, such as 20-HETE, producing both the intermediate aldehyde, 20-oxoarachidonate and the end product, a dicarboxylic acid, (5Z,8Z,11Z,14Z)-eicosatetraenedioate. Class-III ADH is remarkably ineffective in oxidizing ethanol. Required for clearance of cellular formaldehyde, a cytotoxic and carcinogenic metabolite that induces DNA damage. Also acts as a S-nitroso-glutathione reductase by catalyzing the NADH-dependent reduction of S-nitrosoglutathione, thereby regulating protein S-nitrosylation. The polypeptide is Alcohol dehydrogenase class-3 (Bos taurus (Bovine)).